We begin with the raw amino-acid sequence, 308 residues long: Glutaminase (308 aa).

Positions 66, 117, 162, 169, 193, 244, and 262 each coordinate substrate.

Belongs to the glutaminase family. As to quaternary structure, homotetramer.

It carries out the reaction L-glutamine + H2O = L-glutamate + NH4(+). This is Glutaminase from Natranaerobius thermophilus (strain ATCC BAA-1301 / DSM 18059 / JW/NM-WN-LF).